The following is a 335-amino-acid chain: Mycobacterial beta-ketoacyl-[acyl-carrier-protein] synthase III (335 aa).

Active-site residues include C122 and H258. Residues 259-263 are ACP-binding; the sequence is QANSR. N289 is an active-site residue.

Belongs to the thiolase-like superfamily. FabH family. As to quaternary structure, homodimer.

It localises to the cytoplasm. It carries out the reaction malonyl-[ACP] + dodecanoyl-CoA + H(+) = 3-oxotetradecanoyl-[ACP] + CO2 + CoA. The protein operates within lipid metabolism; fatty acid biosynthesis. Its pathway is lipid metabolism; mycolic acid biosynthesis. In terms of biological role, catalyzes the condensation reaction of fatty acid synthesis by the addition to an acyl acceptor of two carbons from malonyl-ACP. Catalyzes the first condensation reaction which initiates fatty acid synthesis and may therefore play a role in governing the total rate of fatty acid production. Possesses both acetoacetyl-ACP synthase and acetyl transacylase activities. Its substrate specificity determines the biosynthesis of branched-chain and/or straight-chain of fatty acids. This is Mycobacterial beta-ketoacyl-[acyl-carrier-protein] synthase III from Mycobacterium marinum (strain ATCC BAA-535 / M).